Reading from the N-terminus, the 267-residue chain is Alpha carbonic anhydrase 4 (267 aa).

An N-terminal signal peptide occupies residues 1–26 (MDTNAKTIFFMAMCFIYLSFPNISHA). N22 carries N-linked (GlcNAc...) asparagine glycosylation. The Alpha-carbonic anhydrase domain maps to 34–264 (TPFTYEQKTE…SKGRSVWFYD (231 aa)). Cysteines 59 and 214 form a disulfide. H99 functions as the Proton acceptor in the catalytic mechanism. Zn(2+) is bound by residues H125 and H127. The N-linked (GlcNAc...) asparagine glycan is linked to N135. H144 provides a ligand contact to Zn(2+). Substrate is bound at residue 210-211 (TV).

The protein belongs to the alpha-class carbonic anhydrase family. Zn(2+) serves as cofactor. Post-translationally, N-glycosylated.

The protein localises to the plastid. It localises to the chloroplast stroma. It carries out the reaction hydrogencarbonate + H(+) = CO2 + H2O. Functionally, reversible hydration of carbon dioxide. In Arabidopsis thaliana (Mouse-ear cress), this protein is Alpha carbonic anhydrase 4 (ACA4).